We begin with the raw amino-acid sequence, 394 residues long: D-mannose isomerase (394 aa).

Catalysis depends on proton donor/acceptor residues His-251 and His-380.

This sequence belongs to the N-acylglucosamine 2-epimerase family. Monomer.

The enzyme catalyses D-mannose = D-fructose. It carries out the reaction D-lyxose = D-xylulose. In terms of biological role, catalyzes the reversible isomerization of D-mannose to D-fructose. Can also isomerize D-lyxose, with lower efficiency. In longer reaction with a higher concentration of enzyme, it can isomerize 4-OH D-mannose derivatives (D-talose and 4-O-monosaccharyl-D-mannose). Cannot use D-glucose. The protein is D-mannose isomerase of Marinomonas mediterranea (strain ATCC 700492 / JCM 21426 / NBRC 103028 / MMB-1).